We begin with the raw amino-acid sequence, 107 residues long: MRMRIKKGDLVEVISGKDKGKRGKVLRVLPKEDKVIVEGVNMVKRHQRPIPQLREGGIIEREAPIYACKVMVVCPACDKRTRVGYRFTEDGKKVRYCKKCGEIIDKD.

This sequence belongs to the universal ribosomal protein uL24 family. In terms of assembly, part of the 50S ribosomal subunit.

Functionally, one of two assembly initiator proteins, it binds directly to the 5'-end of the 23S rRNA, where it nucleates assembly of the 50S subunit. One of the proteins that surrounds the polypeptide exit tunnel on the outside of the subunit. The protein is Large ribosomal subunit protein uL24 of Thermotoga neapolitana (strain ATCC 49049 / DSM 4359 / NBRC 107923 / NS-E).